The following is a 199-amino-acid chain: RNA-free ribonuclease P (199 aa).

This sequence belongs to the HARP family.

The catalysed reaction is Endonucleolytic cleavage of RNA, removing 5'-extranucleotides from tRNA precursor.. In terms of biological role, RNA-free RNase P that catalyzes the removal of the 5'-leader sequence from pre-tRNA to produce the mature 5'-terminus. The sequence is that of RNA-free ribonuclease P from Thermococcus onnurineus (strain NA1).